Reading from the N-terminus, the 75-residue chain is Small ribosomal subunit protein bS18 (75 aa).

It belongs to the bacterial ribosomal protein bS18 family. Part of the 30S ribosomal subunit. Forms a tight heterodimer with protein bS6.

Its function is as follows. Binds as a heterodimer with protein bS6 to the central domain of the 16S rRNA, where it helps stabilize the platform of the 30S subunit. The polypeptide is Small ribosomal subunit protein bS18 (Roseobacter denitrificans (strain ATCC 33942 / OCh 114) (Erythrobacter sp. (strain OCh 114))).